Here is a 244-residue protein sequence, read N- to C-terminus: Carbonic anhydrase (244 aa).

The first 19 residues, 1-19 (MKGKLSIALMLSVCFSASA), serve as a signal peptide directing secretion. In terms of domain architecture, Alpha-carbonic anhydrase spans 23 to 244 (VHWGYEGNGD…QPLNGRIIIH (222 aa)). The cysteines at positions 46 and 199 are disulfide-linked. The active-site Proton acceptor is the His84. Residues His109, His111, and His128 each contribute to the Zn(2+) site. 195–196 (TT) contributes to the substrate binding site.

It belongs to the alpha-carbonic anhydrase family. Zn(2+) is required as a cofactor.

Its subcellular location is the periplasm. It catalyses the reaction hydrogencarbonate + H(+) = CO2 + H2O. Reversible hydration of carbon dioxide. This Pectobacterium carotovorum (Erwinia carotovora) protein is Carbonic anhydrase (cah).